A 489-amino-acid polypeptide reads, in one-letter code: Beta-glucosidase 14 (489 aa).

Positions 1-21 are cleaved as a signal peptide; that stretch reads MTSKYFSVLVFIILASNEVVA. Gln49 contributes to the a beta-D-glucoside binding site. The N-linked (GlcNAc...) asparagine glycan is linked to Asn80. Residues His153 and 198–199 contribute to the a beta-D-glucoside site; that span reads NE. The Proton donor role is filled by Glu199. A disulfide bridge connects residues Cys218 and Cys226. Residue Asn225 is glycosylated (N-linked (GlcNAc...) asparagine). Position 343 (Tyr343) interacts with a beta-D-glucoside. N-linked (GlcNAc...) asparagine glycosylation is present at Asn357. A beta-D-glucoside is bound by residues Glu396, Trp441, 448–449, and Phe457; that span reads EW. The active-site Nucleophile is the Glu396.

This sequence belongs to the glycosyl hydrolase 1 family.

It carries out the reaction Hydrolysis of terminal, non-reducing beta-D-glucosyl residues with release of beta-D-glucose.. The protein is Beta-glucosidase 14 of Arabidopsis thaliana (Mouse-ear cress).